Consider the following 173-residue polypeptide: Small ribosomal subunit protein uS7 (173 aa).

Belongs to the universal ribosomal protein uS7 family. As to quaternary structure, part of the 30S ribosomal subunit. Contacts proteins S9 and S11.

In terms of biological role, one of the primary rRNA binding proteins, it binds directly to 16S rRNA where it nucleates assembly of the head domain of the 30S subunit. Is located at the subunit interface close to the decoding center, probably blocks exit of the E-site tRNA. The sequence is that of Small ribosomal subunit protein uS7 from Orientia tsutsugamushi (strain Ikeda) (Rickettsia tsutsugamushi).